A 142-amino-acid chain; its full sequence is Hemoglobin subunit alpha-I/II (142 aa).

One can recognise a Globin domain in the interval 2–142; the sequence is VLSAADKGNV…VSTVLTSKYR (141 aa). The residue at position 4 (Ser-4) is a Phosphoserine. N6-succinyllysine is present on residues Lys-8 and Lys-12. Position 17 is an N6-acetyllysine; alternate (Lys-17). Lys-17 is modified (N6-succinyllysine; alternate). Tyr-25 is subject to Phosphotyrosine. The residue at position 36 (Ser-36) is a Phosphoserine. The residue at position 41 (Lys-41) is an N6-succinyllysine. Ser-50 carries the post-translational modification Phosphoserine. His-59 is an O2 binding site. His-88 is a binding site for heme b. At Ser-103 the chain carries Phosphoserine. The residue at position 109 (Thr-109) is a Phosphothreonine. The residue at position 125 (Ser-125) is a Phosphoserine. Phosphothreonine occurs at positions 135 and 138. Position 139 is a phosphoserine (Ser-139).

The protein belongs to the globin family. Heterotetramer of two alpha chains and two beta chains. Red blood cells.

In terms of biological role, involved in oxygen transport from the lung to the various peripheral tissues. This Bison bonasus (European bison) protein is Hemoglobin subunit alpha-I/II.